The following is a 433-amino-acid chain: C2H2 type master regulator of conidiophore development brlA (433 aa).

Disordered regions lie at residues Pro-23–His-64 and Lys-240–Arg-265. Residues Thr-30–Ser-48 are compositionally biased toward low complexity. A compositionally biased stretch (polar residues) spans Lys-240–Ser-264. C2H2-type zinc fingers lie at residues Phe-321–His-345 and His-351–His-376. The segment at Glu-391–Leu-416 is disordered.

The protein localises to the nucleus. In terms of biological role, brlA, abaA and wetA are pivotal regulators of conidiophore development and conidium maturation. They act individually and together to regulate their own expression and that of numerous other sporulation-specific genes. Binds promoters of target genes at brlA response elements (BREs) containing the conserved sequence 5'-(C/A)(A/G)AGGG(G/A)-3'. Is not required for penicillin V production. In Penicillium rubens (strain ATCC 28089 / DSM 1075 / NRRL 1951 / Wisconsin 54-1255) (Penicillium chrysogenum), this protein is C2H2 type master regulator of conidiophore development brlA.